A 181-amino-acid chain; its full sequence is MQDQIRQEKIVGSRRFSNYFWASLLLVGGLMFLLAGISSYLKINLLPFANTTELVFIPQGIVMMFYGTLSFGLSIYIMATLFWDIGSGYNEYNKVENLVKVVRRGFPGKNREILLTYPLNNIRSIGIKISEGLNPQRIIYLCLKDERKIPLTPVQQPDSISDLEDQAADLAKFLDLKLENL.

2 helical membrane passes run 19–39 (YFWASLLLVGGLMFLLAGISS) and 61–81 (IVMMFYGTLSFGLSIYIMATL).

The protein belongs to the Ycf4 family.

It localises to the plastid. Its subcellular location is the chloroplast thylakoid membrane. Functionally, seems to be required for the assembly of the photosystem I complex. This chain is Photosystem I assembly protein Ycf4, found in Thalassiosira pseudonana (Marine diatom).